A 310-amino-acid polypeptide reads, in one-letter code: MRKALYSLLFYMCICLYIYTPVFMANLKEIEVGNYFICNLRDYPTGNCSVDHDYNKTIKLLCPIVNNKNNSNKTYDPSYCFKYDGIKDEFIINNKQAYIHNTLPGVILTNNIENDTYNLSIYPPFVVKEDVTIVCICDSEKGNEGITPYLKINIKKTHGLNNDLEGDYIKGCDYGNNQGKYKFLTKPVKYTSNPICEIDAYPGDVVGINCNSYTTKMQGARLEPEGCFAMVYFSILTMKFIKTNVNNIMPNAKYYPDLASHPGNQNSKIFLTSYLLIPNEVDRDILIYCNCSYNGNKGLAIYRIFSTKAS.

The first 24 residues, 1 to 24 (MRKALYSLLFYMCICLYIYTPVFM), serve as a signal peptide directing secretion. 6-Cys domains follow at residues 25–157 (ANLK…IKKT) and 168–309 (YIKG…STKA). Disulfide bonds link cysteine 38-cysteine 48, cysteine 62-cysteine 137, cysteine 80-cysteine 135, cysteine 172-cysteine 196, cysteine 210-cysteine 291, and cysteine 227-cysteine 289. N-linked (GlcNAc...) asparagine glycans are attached at residues asparagine 72, asparagine 114, and asparagine 118. Residue asparagine 290 is glycosylated (N-linked (GlcNAc...) asparagine).

Its subcellular location is the cell surface. It localises to the cell membrane. In terms of biological role, involved in sporozoite infection of hepatocytes and replication therein. The polypeptide is Sporozoite surface protein P36 (P36) (Plasmodium yoelii yoelii).